Here is a 232-residue protein sequence, read N- to C-terminus: Large ribosomal subunit protein uL1 (232 aa).

The protein belongs to the universal ribosomal protein uL1 family. As to quaternary structure, part of the 50S ribosomal subunit.

In terms of biological role, binds directly to 23S rRNA. The L1 stalk is quite mobile in the ribosome, and is involved in E site tRNA release. Protein L1 is also a translational repressor protein, it controls the translation of the L11 operon by binding to its mRNA. This chain is Large ribosomal subunit protein uL1, found in Burkholderia ambifaria (strain MC40-6).